A 142-amino-acid chain; its full sequence is uncharacterized protein (142 aa).

The span at 1 to 14 (MKNVSPRRNKHYKS) shows a compositional bias: basic residues. A disordered region spans residues 1–40 (MKNVSPRRNKHYKSYKPQVPLKKPVLLPQHPPYRNRRKKK). Residues 16-28 (KPQVPLKKPVLLP) show a composition bias toward low complexity.

This is an uncharacterized protein from Aquifex aeolicus (strain VF5).